Consider the following 225-residue polypeptide: Urease accessory protein UreF (225 aa).

It belongs to the UreF family. UreD, UreF and UreG form a complex that acts as a GTP-hydrolysis-dependent molecular chaperone, activating the urease apoprotein by helping to assemble the nickel containing metallocenter of UreC. The UreE protein probably delivers the nickel.

Its subcellular location is the cytoplasm. Required for maturation of urease via the functional incorporation of the urease nickel metallocenter. The protein is Urease accessory protein UreF of Geobacillus kaustophilus (strain HTA426).